Consider the following 1018-residue polypeptide: Fibronectin-binding protein A (1018 aa).

An N-terminal signal peptide occupies residues 1 to 36 (MKNNLRYGIRKHKLGAASVFLGTMIVVGMGQDKEAA). A YSIRK-G/S signaling motif motif is present at residues 7–18 (YGIRKHKLGAAS). Residues 37–511 (ASEQKTTTVE…SNKANGNGKN (475 aa)) are ligand-binding A region. Disordered regions lie at residues 38–61 (SEQK…SETQ) and 78–195 (ATVT…ETGT). Polar residues-rich tracts occupy residues 39-61 (EQKT…SETQ) and 78-92 (ATVT…QVTT). Residues 112-126 (TVKEEVVKEEAKPQV) are compositionally biased toward basic and acidic residues. Residues 129–139 (TTQSQDNSGDQ) show a composition bias toward polar residues. Residues 194–511 (GTDVTSKVTV…SNKANGNGKN (318 aa)) form a fibrinogen/elastin/tropoelastin-binding region. The interval 512–872 (GPIIQNNKFE…EGQQTIEEDT (361 aa)) is fibronectin-binding. The stretch at 545-574 (EEYDSSTLDIDYHTAIDGGGGYVDGYIETI) is one B-1 repeat. Residues 545–604 (EEYDSSTLDIDYHTAIDGGGGYVDGYIETIEETDSSAIDIDYHTAVDSEAGHVGGYTESS) are 2 X approximate tandem repeats. The B-2 repeat unit spans residues 575-604 (EETDSSAIDIDYHTAVDSEAGHVGGYTESS). Disordered stretches follow at residues 595–622 (GHVG…NSKH), 740–813 (LGYE…DIDF), and 827–997 (EIIE…GMLF). The stretch at 745 to 782 (GQNSGNQSFEEDTEEDKPKYEQGGNIVDIDFDSVPQIH) is one D-1 repeat. The segment at 745-878 (GQNSGNQSFE…EEDTTPPIVP (134 aa)) is 4 X approximate tandem repeats. One copy of the D-2 repeat lies at 783-820 (GQNKGNQSFEEDTEKDKPKYEHGGNIIDIDFDSVPHIH). The stretch at 821–859 (GFNKHTEIIEEDTNKDKPSYQFGGHNSVDFEEDTLPKVS) is one D-3 repeat. Positions 827–838 (EIIEEDTNKDKP) are enriched in basic and acidic residues. A D-4; truncated repeat occupies 860-878 (GQNEGQQTIEEDTTPPIVP). The segment covering 875 to 938 (PIVPPTPPTP…PAEPGKPVPP (64 aa)) has biased composition (pro residues). 5 WR repeats span residues 879–892 (PTPP…EPET), 893–906 (PTPP…EPET), 907–920 (PTPP…EPET), 921–934 (PTPP…EPGK), and 935–948 (PVPP…KPSK). The tract at residues 879 to 948 (PTPPTPEVPS…AKEEPKKPSK (70 aa)) is 5 X tandem repeats, Pro-rich (WR). The short motif at 982–986 (LPETG) is the LPXTG sorting signal element. The residue at position 985 (T985) is a Pentaglycyl murein peptidoglycan amidated threonine. Positions 986–1018 (GGEESTNKGMLFGGLFSILGLALLRRNKKNHKA) are cleaved as a propeptide — removed by sortase.

The protein resides in the secreted. The protein localises to the cell wall. Functionally, promotes bacterial attachment to multiple substrates, such as fibronectin (Fn), fibrinogen (Fg), elastin peptides and tropoelastin. This confers to S.aureus the ability to invade endothelial cells. Promotes adherence to and aggregation of activated platelets. This chain is Fibronectin-binding protein A, found in Staphylococcus aureus (strain USA300).